Here is a 323-residue protein sequence, read N- to C-terminus: MNPNFLEFEQPIADLEAKIEELRLVGSGSDINISEEVAKLQEKSITLTESIFRGLSSWQISQLSRHPKRPYMLDYIKRIFTDFDELHGDRAFSDDPAIIGGMTRLNGQPVMVIGHQKGREVKEKVRRNFGMPKPEGYRKALRLMEMAERFKLPVLTFIDTPGAFPGIDAEERGQSEAIARNLRVMSQLKTPILATVIGEGGSGGALAIGVCDHLQMLEFSTYSVISPEGCASILWRSADKAPEAAQAMGLTAGRLHELGIVDQVIKEPLGGAHRDYDQAADAIRKALAAQLESLCSMETDALINRRYERLMSYGNVVSDPADE.

In terms of domain architecture, CoA carboxyltransferase C-terminal spans Asn32 to Ser293.

Belongs to the AccA family. In terms of assembly, acetyl-CoA carboxylase is a heterohexamer composed of biotin carboxyl carrier protein (AccB), biotin carboxylase (AccC) and two subunits each of ACCase subunit alpha (AccA) and ACCase subunit beta (AccD).

It localises to the cytoplasm. The catalysed reaction is N(6)-carboxybiotinyl-L-lysyl-[protein] + acetyl-CoA = N(6)-biotinyl-L-lysyl-[protein] + malonyl-CoA. It participates in lipid metabolism; malonyl-CoA biosynthesis; malonyl-CoA from acetyl-CoA: step 1/1. Functionally, component of the acetyl coenzyme A carboxylase (ACC) complex. First, biotin carboxylase catalyzes the carboxylation of biotin on its carrier protein (BCCP) and then the CO(2) group is transferred by the carboxyltransferase to acetyl-CoA to form malonyl-CoA. In Alcanivorax borkumensis (strain ATCC 700651 / DSM 11573 / NCIMB 13689 / SK2), this protein is Acetyl-coenzyme A carboxylase carboxyl transferase subunit alpha.